The following is a 258-amino-acid chain: Imidazole glycerol phosphate synthase subunit HisF (258 aa).

Catalysis depends on residues aspartate 11 and aspartate 130.

This sequence belongs to the HisA/HisF family. In terms of assembly, heterodimer of HisH and HisF.

Its subcellular location is the cytoplasm. It carries out the reaction 5-[(5-phospho-1-deoxy-D-ribulos-1-ylimino)methylamino]-1-(5-phospho-beta-D-ribosyl)imidazole-4-carboxamide + L-glutamine = D-erythro-1-(imidazol-4-yl)glycerol 3-phosphate + 5-amino-1-(5-phospho-beta-D-ribosyl)imidazole-4-carboxamide + L-glutamate + H(+). It participates in amino-acid biosynthesis; L-histidine biosynthesis; L-histidine from 5-phospho-alpha-D-ribose 1-diphosphate: step 5/9. Functionally, IGPS catalyzes the conversion of PRFAR and glutamine to IGP, AICAR and glutamate. The HisF subunit catalyzes the cyclization activity that produces IGP and AICAR from PRFAR using the ammonia provided by the HisH subunit. The protein is Imidazole glycerol phosphate synthase subunit HisF of Escherichia coli (strain ATCC 8739 / DSM 1576 / NBRC 3972 / NCIMB 8545 / WDCM 00012 / Crooks).